A 1043-amino-acid polypeptide reads, in one-letter code: Isoleucine--tRNA ligase (1043 aa).

L-isoleucyl-5'-AMP is bound by residues Pro-46 and His-57. A 'HIGH' region motif is present at residues 47–57 (PTANGLPHVGH). Positions 181 and 184 each coordinate Zn(2+). 2 residues coordinate L-valine: His-319 and Asp-328. Zn(2+)-binding residues include Cys-389, Cys-392, Cys-461, Cys-464, Cys-502, and Cys-504. The L-isoleucyl-5'-AMP site is built by Glu-550, Gly-551, Asp-553, Gln-554, and His-581. The 'KMSKS' region signature appears at 591–595 (KMSKS). Lys-594 lines the ATP pocket.

Belongs to the class-I aminoacyl-tRNA synthetase family. IleS type 2 subfamily. Monomer. The cofactor is Zn(2+).

The protein resides in the cytoplasm. The enzyme catalyses tRNA(Ile) + L-isoleucine + ATP = L-isoleucyl-tRNA(Ile) + AMP + diphosphate. In terms of biological role, catalyzes the attachment of isoleucine to tRNA(Ile). As IleRS can inadvertently accommodate and process structurally similar amino acids such as valine, to avoid such errors it has two additional distinct tRNA(Ile)-dependent editing activities. One activity is designated as 'pretransfer' editing and involves the hydrolysis of activated Val-AMP. The other activity is designated 'posttransfer' editing and involves deacylation of mischarged Val-tRNA(Ile). The sequence is that of Isoleucine--tRNA ligase (ileS) from Thermus thermophilus (strain ATCC 27634 / DSM 579 / HB8).